Consider the following 337-residue polypeptide: uncharacterized protein (337 aa).

The interval 291 to 314 (NKTRQCSNTKTTTKSTMTPINNGF) is disordered. The span at 299–308 (TKTTTKSTMT) shows a compositional bias: low complexity.

This is an uncharacterized protein from Acanthamoeba polyphaga mimivirus (APMV).